Consider the following 192-residue polypeptide: Transcriptional activator GvpE (192 aa).

Residue 140–145 (KRKVYR) participates in DNA binding. The tract at residues 150–181 (EATFDTVEPAVNRLVTFSLVLKALMIDCNARY) is leucine-zipper.

Interacts with GvpD, also with c-GvpD from H.salinarum.

The protein resides in the cytoplasm. Its activity is regulated as follows. The amount of protein that accumulates is controlled by GvpD; GvpD causes a reduction in the amount of GvpE, preventing accumulation of excessive amounts of gas vesicles. Plays a regulatory role in gas vesicle synthesis, activates transcription of the gvpA operon, and probably of the gvpD operon. Gas vesicles are hollow, gas filled proteinaceous nanostructures found in some microorganisms. They allow positioning of halobacteria at the optimal depth for growth in the poorly aerated, shallow brine pools of their habitat. Its function is as follows. Expression of a 9.5 kb mc-vac DNA fragment containing 2 divergently transcribed regions (gvpD-gvpE-gvpF-gvpG-gvpH-gvpI-gvpJ-gvpK-gvpL-gvpM and gvpA-gvpC-gvpN-gvpO) allows H.volcanii to produce gas vesicles. The chain is Transcriptional activator GvpE from Haloferax mediterranei (strain ATCC 33500 / DSM 1411 / JCM 8866 / NBRC 14739 / NCIMB 2177 / R-4) (Halobacterium mediterranei).